The following is a 397-amino-acid chain: Tryptophan synthase beta chain 1 (397 aa).

Lys90 is modified (N6-(pyridoxal phosphate)lysine).

Belongs to the TrpB family. As to quaternary structure, tetramer of two alpha and two beta chains. Pyridoxal 5'-phosphate is required as a cofactor.

It carries out the reaction (1S,2R)-1-C-(indol-3-yl)glycerol 3-phosphate + L-serine = D-glyceraldehyde 3-phosphate + L-tryptophan + H2O. It participates in amino-acid biosynthesis; L-tryptophan biosynthesis; L-tryptophan from chorismate: step 5/5. The beta subunit is responsible for the synthesis of L-tryptophan from indole and L-serine. The chain is Tryptophan synthase beta chain 1 (trpB1) from Aquifex aeolicus (strain VF5).